A 1027-amino-acid chain; its full sequence is Scavenger receptor cysteine-rich domain-containing protein SCART1 (1027 aa).

An N-terminal signal peptide occupies residues 1-19 (MRAALWTLGLGPLLLNLWA). The Extracellular portion of the chain corresponds to 20-906 (VPIGGPGALR…APFRTFWVVS (887 aa)). Positions 28–128 (LRLAYRHSTC…HAWVVVALCS (101 aa)) constitute an SRCR 1 domain. 3 disulfides stabilise this stretch: Cys53-Cys117, Cys66-Cys127, and Cys97-Cys107. An N-linked (GlcNAc...) asparagine glycan is attached at Asn94. N-linked (GlcNAc...) asparagine glycosylation is present at Asn129. SRCR domains lie at 135-227 (LRLV…VVCS), 232-326 (ARLV…LRCS), 328-428 (FRMV…AVCS), 434-534 (LRLR…VVCS), 555-656 (LSLH…VFCS), 661-761 (LRLR…AGLS), and 786-886 (LRVR…VRCW). 6 disulfide bridges follow: Cys160-Cys216, Cys171-Cys226, Cys196-Cys206, Cys253-Cys315, Cys266-Cys325, and Cys297-Cys307. An N-linked (GlcNAc...) asparagine glycan is attached at Asn332. Cystine bridges form between Cys353-Cys417, Cys366-Cys427, Cys397-Cys407, Cys472-Cys533, Cys503-Cys513, Cys594-Cys655, and Cys625-Cys635. 2 disulfide bridges follow: Cys824-Cys885 and Cys855-Cys865. Residues 907–927 (VVLGSLLGLLLLGLMAFLILP) traverse the membrane as a helical segment. Residues 928–1027 (RVTQAMQRGL…AAFPLEEMTL (100 aa)) are Cytoplasmic-facing.

In terms of tissue distribution, mainly expressed by CD4(+) and CD8(+) T lymphocytes. Also highly expressed in small intestine and colon. Expressed (at protein level) in small intestine, stomach, gall bladder, and placental villi.

Its subcellular location is the membrane. In terms of biological role, may play a role in the immune system, perhaps as a co-receptor on alphabeta and gammadelta T-cells. This Homo sapiens (Human) protein is Scavenger receptor cysteine-rich domain-containing protein SCART1.